Here is a 736-residue protein sequence, read N- to C-terminus: Phosphoribosylformylglycinamidine synthase subunit PurL (736 aa).

Histidine 50 is an active-site residue. Tyrosine 53 and lysine 92 together coordinate ATP. Residue glutamate 94 participates in Mg(2+) binding. Substrate contacts are provided by residues 95 to 98 (SHNH) and arginine 117. Residue histidine 96 is the Proton acceptor of the active site. Aspartate 118 is a Mg(2+) binding site. Glutamine 241 is a binding site for substrate. Aspartate 269 lines the Mg(2+) pocket. 313–315 (ESQ) provides a ligand contact to substrate. Residues aspartate 495 and glycine 532 each coordinate ATP. Mg(2+) is bound at residue asparagine 533. Serine 535 contributes to the substrate binding site.

The protein belongs to the FGAMS family. Monomer. Part of the FGAM synthase complex composed of 1 PurL, 1 PurQ and 2 PurS subunits.

It is found in the cytoplasm. The catalysed reaction is N(2)-formyl-N(1)-(5-phospho-beta-D-ribosyl)glycinamide + L-glutamine + ATP + H2O = 2-formamido-N(1)-(5-O-phospho-beta-D-ribosyl)acetamidine + L-glutamate + ADP + phosphate + H(+). It functions in the pathway purine metabolism; IMP biosynthesis via de novo pathway; 5-amino-1-(5-phospho-D-ribosyl)imidazole from N(2)-formyl-N(1)-(5-phospho-D-ribosyl)glycinamide: step 1/2. Functionally, part of the phosphoribosylformylglycinamidine synthase complex involved in the purines biosynthetic pathway. Catalyzes the ATP-dependent conversion of formylglycinamide ribonucleotide (FGAR) and glutamine to yield formylglycinamidine ribonucleotide (FGAM) and glutamate. The FGAM synthase complex is composed of three subunits. PurQ produces an ammonia molecule by converting glutamine to glutamate. PurL transfers the ammonia molecule to FGAR to form FGAM in an ATP-dependent manner. PurS interacts with PurQ and PurL and is thought to assist in the transfer of the ammonia molecule from PurQ to PurL. The protein is Phosphoribosylformylglycinamidine synthase subunit PurL of Bartonella tribocorum (strain CIP 105476 / IBS 506).